Reading from the N-terminus, the 349-residue chain is D-arabinitol dehydrogenase 1 (349 aa).

7 residues coordinate Zn(2+): Cys46, His67, Cys97, Cys100, Cys103, Cys111, and Glu151.

This sequence belongs to the zinc-containing alcohol dehydrogenase family. Requires Zn(2+) as cofactor.

The protein resides in the cell projection. The catalysed reaction is D-arabinitol + NADP(+) = D-xylulose + NADPH + H(+). The enzyme catalyses D-arabinitol + NADP(+) = D-ribulose + NADPH + H(+). Its function is as follows. D-arabinitol dehydrogenase which mostly produces D-arabinitol in haustoria, the appendages of the parasitic fungus that penetrate the host's tissue and draws nutrients from it. D-arabinitol accumulation may serve as a carbohydrate storage compound. D-arabinitol is also capable of quenching reactive oxygen species involved in host plant defense reactions, thus providing protection for the rust fungus during the pathogenic interaction. In Uromyces fabae (Rust fungus), this protein is D-arabinitol dehydrogenase 1 (ARD1).